A 773-amino-acid polypeptide reads, in one-letter code: Disintegrin and metalloproteinase domain-containing protein 11 (773 aa).

The N-terminal stretch at 1–24 is a signal peptide; that stretch reads MRRLRRWAIAALLLLPLLPPPGLG. The propeptide occupies 25–229; sequence ALGPRGALHW…PNWPKLRRKR (205 aa). Positions 36 to 82 are disordered; that stretch reads SSAHVGSPESPEGSEVTEPSRLVRQSSGGEVRKPQLDTRVRQDPPRG. The span at 65-79 shows a compositional bias: basic and acidic residues; that stretch reads EVRKPQLDTRVRQDP. N100 and N167 each carry an N-linked (GlcNAc...) asparagine glycan. Topologically, residues 230–738 are extracellular; it reads QVRRGHPTVH…ERYKGPSGTN (509 aa). The 200-residue stretch at 243 to 442 folds into the Peptidase M12B domain; that stretch reads KYVELIVIND…GGGSCLFNKP (200 aa). The segment at 336 to 773 is required for localization to cerebellar cortex basket cell terminals. Also required for localization of KCNA1, KCNA2, DLG4 and ADAM22 to cerebellar cortex basket cell terminal perisomatic axons and pinceaux; it reads GRTFQSTSSG…NIRRGRSGGA (438 aa). Cystine bridges form between C353/C437, C396/C421, C398/C405, and C507/C527. The 88-residue stretch at 448–535 folds into the Disintegrin domain; sequence PPECGNGFVE…QCPPNLHKLD (88 aa). N-linked (GlcNAc...) asparagine glycosylation is found at N609 and N677. Intrachain disulfides connect C681–C696, C690–C702, and C704–C713. The region spanning 681-713 is the EGF-like domain; the sequence is CPGSGERRICSHHGVCSNEGKCICQPDWTGKDC. A helical transmembrane segment spans residues 739 to 759; that stretch reads IIIGSIAGAVLVAAIVLGGTG. The Cytoplasmic portion of the chain corresponds to 760–773; sequence WGFKNIRRGRSGGA.

In terms of assembly, interacts with LGI1 and LGI4. Interacts with KCNA1/KV1.1, KCNA2/KV1.2, DLG4/PSD-95 and ADAM22. The precursor is cleaved by a furin endopeptidase. As to expression, abundantly expressed in cerebellar cortex basket cell terminals and pinceaux, weakly expressed in Purkinje cells (at protein level). Weakly expressed in the heart. Abundantly in expressed in neurons throughout the central nervous system including the telencephalon, diencephalic and brainstem nuclei, cerebellum and spinal cord. Expressed in the peripheral nervous system trigeminal and dorsal root ganglia. Expressed in the ganglion and bipolar cells of the retinae and weakly in the cornea of the eyes. Expressed in the hepatocytes of the parenchyma and hepatic lobules of the liver. Expressed in distinct focal areas in the juxtamedullary cortex of the kidney. Expressed in spermatocytes in the seminiferous tubules of the testes. Expressed in the stratum spinosum of the stratified squamous epithelia of the tongue and esophagus.

Its subcellular location is the presynaptic cell membrane. It is found in the perikaryon. The protein localises to the cell projection. It localises to the axon. Functionally, probable ligand for integrin in the brain. This is a non catalytic metalloprotease-like protein. Required for localization of the potassium channel subunit proteins KCNA1/KV1.1 and KCNA2/KV1.2 at cerebellar cortex basket cell distal terminals, is thereby involved in ephaptic inhibitory synchronization of Purkinje cell firing and response to stress. Plays a role in spatial learning and motor coordination. Involved in the nociceptive pain response to chemical-derived stimulation. The sequence is that of Disintegrin and metalloproteinase domain-containing protein 11 (Adam11) from Mus musculus (Mouse).